The chain runs to 248 residues: Myelin protein P0 (248 aa).

Positions 1 to 29 are cleaved as a signal peptide; sequence MAPGAPSSSPSPILAALLFSSLVLSPTLA. The region spanning 30 to 143 is the Ig-like V-type domain; sequence IVVYTDREVY…DIVGKTSQVT (114 aa). The Extracellular segment spans residues 30 to 153; sequence IVVYTDREVY…LYVFEKVPTR (124 aa). C50 and C127 are oxidised to a cystine. Residue N122 is glycosylated (N-linked (GlcNAc...) (complex) asparagine). A helical transmembrane segment spans residues 154 to 179; it reads YGVVLGAVIGGILGVVLLLLLLFYLI. Residues 180-248 lie on the Cytoplasmic side of the membrane; that stretch reads RYCWLRRQAA…GLGESRKDKK (69 aa). Phosphoserine; by PKC is present on S210. The disordered stretch occupies residues 222-248; it reads MLDHSRSTKAASEKKSKGLGESRKDKK. Basic and acidic residues predominate over residues 224 to 248; that stretch reads DHSRSTKAASEKKSKGLGESRKDKK. 2 positions are modified to phosphoserine: S226 and S228. The residue at position 233 (S233) is a Phosphoserine; by PKC. S237 is modified (phosphoserine). Phosphoserine; by PKC is present on S243.

The protein belongs to the myelin P0 protein family. As to quaternary structure, homodimer and homotetramer. In terms of processing, N-glycosylated; contains sulfate-substituted glycan. As to expression, found only in peripheral nervous system Schwann cells.

It localises to the cell membrane. In terms of biological role, is an adhesion molecule necessary for normal myelination in the peripheral nervous system. It mediates adhesion between adjacent myelin wraps and ultimately drives myelin compaction. The protein is Myelin protein P0 (Mpz) of Rattus norvegicus (Rat).